A 311-amino-acid chain; its full sequence is Lipoyl synthase (311 aa).

Positions 47, 52, 58, 73, 77, 80, and 286 each coordinate [4Fe-4S] cluster. Residues 59-276 form the Radical SAM core domain; the sequence is WSRHTATYLA…RSVGESLGLF (218 aa).

This sequence belongs to the radical SAM superfamily. Lipoyl synthase family. Requires [4Fe-4S] cluster as cofactor.

The protein localises to the cytoplasm. It carries out the reaction [[Fe-S] cluster scaffold protein carrying a second [4Fe-4S](2+) cluster] + N(6)-octanoyl-L-lysyl-[protein] + 2 oxidized [2Fe-2S]-[ferredoxin] + 2 S-adenosyl-L-methionine + 4 H(+) = [[Fe-S] cluster scaffold protein] + N(6)-[(R)-dihydrolipoyl]-L-lysyl-[protein] + 4 Fe(3+) + 2 hydrogen sulfide + 2 5'-deoxyadenosine + 2 L-methionine + 2 reduced [2Fe-2S]-[ferredoxin]. The protein operates within protein modification; protein lipoylation via endogenous pathway; protein N(6)-(lipoyl)lysine from octanoyl-[acyl-carrier-protein]: step 2/2. In terms of biological role, catalyzes the radical-mediated insertion of two sulfur atoms into the C-6 and C-8 positions of the octanoyl moiety bound to the lipoyl domains of lipoate-dependent enzymes, thereby converting the octanoylated domains into lipoylated derivatives. This chain is Lipoyl synthase, found in Chlamydia trachomatis serovar A (strain ATCC VR-571B / DSM 19440 / HAR-13).